The chain runs to 232 residues: tRNA pseudouridine synthase B (232 aa).

Asp53 acts as the Nucleophile in catalysis.

Belongs to the pseudouridine synthase TruB family. Type 1 subfamily.

It carries out the reaction uridine(55) in tRNA = pseudouridine(55) in tRNA. Functionally, responsible for synthesis of pseudouridine from uracil-55 in the psi GC loop of transfer RNAs. This is tRNA pseudouridine synthase B from Malacoplasma penetrans (strain HF-2) (Mycoplasma penetrans).